The following is a 268-amino-acid chain: Cytochrome c oxidase subunit 3 (268 aa).

Helical transmembrane passes span 23–43, 49–69, 88–108, 141–161, 166–186, 203–223, and 246–266; these read ILVS…MHGF, WVVF…RDII, IGFI…FWAF, TILL…LLGG, TLLG…CQYM, VFYF…IMLG, and ILYY…FYWW.

Belongs to the cytochrome c oxidase subunit 3 family. In terms of assembly, component of the cytochrome c oxidase (complex IV, CIV), a multisubunit enzyme composed of a catalytic core of 3 subunits and several supernumerary subunits. The complex exists as a monomer or a dimer and forms supercomplexes (SCs) in the inner mitochondrial membrane with ubiquinol-cytochrome c oxidoreductase (cytochrome b-c1 complex, complex III, CIII).

The protein localises to the mitochondrion inner membrane. The enzyme catalyses 4 Fe(II)-[cytochrome c] + O2 + 8 H(+)(in) = 4 Fe(III)-[cytochrome c] + 2 H2O + 4 H(+)(out). Its function is as follows. Component of the cytochrome c oxidase, the last enzyme in the mitochondrial electron transport chain which drives oxidative phosphorylation. The respiratory chain contains 3 multisubunit complexes succinate dehydrogenase (complex II, CII), ubiquinol-cytochrome c oxidoreductase (cytochrome b-c1 complex, complex III, CIII) and cytochrome c oxidase (complex IV, CIV), that cooperate to transfer electrons derived from NADH and succinate to molecular oxygen, creating an electrochemical gradient over the inner membrane that drives transmembrane transport and the ATP synthase. Cytochrome c oxidase is the component of the respiratory chain that catalyzes the reduction of oxygen to water. Electrons originating from reduced cytochrome c in the intermembrane space (IMS) are transferred via the dinuclear copper A center (CU(A)) of subunit 2 and heme A of subunit 1 to the active site in subunit 1, a binuclear center (BNC) formed by heme A3 and copper B (CU(B)). The BNC reduces molecular oxygen to 2 water molecules using 4 electrons from cytochrome c in the IMS and 4 protons from the mitochondrial matrix. In Yarrowia lipolytica (strain CLIB 122 / E 150) (Yeast), this protein is Cytochrome c oxidase subunit 3 (COX3).